We begin with the raw amino-acid sequence, 456 residues long: Enolase (456 aa).

Gln177 is a binding site for (2R)-2-phosphoglycerate. Catalysis depends on Glu219, which acts as the Proton donor. Mg(2+) is bound by residues Asp256, Glu310, and Asp337. Residues Lys362, Arg391, Ser392, and Lys413 each contribute to the (2R)-2-phosphoglycerate site. The active-site Proton acceptor is the Lys362.

The protein belongs to the enolase family. In terms of assembly, homodimer. The cofactor is Mg(2+).

It is found in the cytoplasm. The protein resides in the secreted. The protein localises to the cell surface. It catalyses the reaction (2R)-2-phosphoglycerate = phosphoenolpyruvate + H2O. The protein operates within carbohydrate degradation; glycolysis; pyruvate from D-glyceraldehyde 3-phosphate: step 4/5. Catalyzes the reversible conversion of 2-phosphoglycerate (2-PG) into phosphoenolpyruvate (PEP). It is essential for the degradation of carbohydrates via glycolysis. Its function is as follows. 'Moonlights' as a plasminogen receptor. Binds plasminogen, but no fibronectin binding was observed. Plasminogen binding increases bacterial adherence to host cells; plasmin activity leads to degradation of host extracellular matrix proteins, facilitating bacterial dissemination and disease spread. The chain is Enolase from Mycoplasma pneumoniae (strain ATCC 29342 / M129 / Subtype 1) (Mycoplasmoides pneumoniae).